A 55-amino-acid polypeptide reads, in one-letter code: ATP synthase F(0) complex subunit 8 (55 aa).

The helical transmembrane segment at 4–24 (LNPSPWFIILLFSWVIFMVIL) threads the bilayer.

Belongs to the ATPase protein 8 family. As to quaternary structure, component of the ATP synthase complex composed at least of ATP5F1A/subunit alpha, ATP5F1B/subunit beta, ATP5MC1/subunit c (homooctomer), MT-ATP6/subunit a, MT-ATP8/subunit 8, ATP5ME/subunit e, ATP5MF/subunit f, ATP5MG/subunit g, ATP5MK/subunit k, ATP5MJ/subunit j, ATP5F1C/subunit gamma, ATP5F1D/subunit delta, ATP5F1E/subunit epsilon, ATP5PF/subunit F6, ATP5PB/subunit b, ATP5PD/subunit d, ATP5PO/subunit OSCP. ATP synthase complex consists of a soluble F(1) head domain (subunits alpha(3) and beta(3)) - the catalytic core - and a membrane F(0) domain - the membrane proton channel (subunits c, a, 8, e, f, g, k and j). These two domains are linked by a central stalk (subunits gamma, delta, and epsilon) rotating inside the F1 region and a stationary peripheral stalk (subunits F6, b, d, and OSCP).

It localises to the mitochondrion membrane. In terms of biological role, subunit 8, of the mitochondrial membrane ATP synthase complex (F(1)F(0) ATP synthase or Complex V) that produces ATP from ADP in the presence of a proton gradient across the membrane which is generated by electron transport complexes of the respiratory chain. ATP synthase complex consist of a soluble F(1) head domain - the catalytic core - and a membrane F(1) domain - the membrane proton channel. These two domains are linked by a central stalk rotating inside the F(1) region and a stationary peripheral stalk. During catalysis, ATP synthesis in the catalytic domain of F(1) is coupled via a rotary mechanism of the central stalk subunits to proton translocation. In vivo, can only synthesize ATP although its ATP hydrolase activity can be activated artificially in vitro. Part of the complex F(0) domain. This chain is ATP synthase F(0) complex subunit 8, found in Scyliorhinus canicula (Small-spotted catshark).